We begin with the raw amino-acid sequence, 365 residues long: Ribosomal RNA large subunit methyltransferase F (365 aa).

Low complexity-rich tracts occupy residues 1–18 (MPKP…SPAG) and 30–42 (AKLK…AASK). Positions 1 to 50 (MPKPAIKTAAKPATSPAGKRAKPNTPQSVAKLKASTAKAASKPKAKLGEK) are disordered.

It belongs to the methyltransferase superfamily. METTL16/RlmF family.

It localises to the cytoplasm. The catalysed reaction is adenosine(1618) in 23S rRNA + S-adenosyl-L-methionine = N(6)-methyladenosine(1618) in 23S rRNA + S-adenosyl-L-homocysteine + H(+). Specifically methylates the adenine in position 1618 of 23S rRNA. This Shewanella oneidensis (strain ATCC 700550 / JCM 31522 / CIP 106686 / LMG 19005 / NCIMB 14063 / MR-1) protein is Ribosomal RNA large subunit methyltransferase F.